Reading from the N-terminus, the 142-residue chain is Large ribosomal subunit protein uL11 (142 aa).

This sequence belongs to the universal ribosomal protein uL11 family. As to quaternary structure, part of the ribosomal stalk of the 50S ribosomal subunit. Interacts with L10 and the large rRNA to form the base of the stalk. L10 forms an elongated spine to which L12 dimers bind in a sequential fashion forming a multimeric L10(L12)X complex. Post-translationally, one or more lysine residues are methylated.

In terms of biological role, forms part of the ribosomal stalk which helps the ribosome interact with GTP-bound translation factors. The sequence is that of Large ribosomal subunit protein uL11 from Rhizobium meliloti (strain 1021) (Ensifer meliloti).